A 156-amino-acid chain; its full sequence is MPTWHYSVRVDEEKSAKAMVWDAPISYKKIVELARLLKGMKVDEARRFLERVARGEEPIPVRRYSGKQAHHRGLAAKYKWPIGRYPVKAAKILLRLLDNVTNNAEVKGLDTERLRIVHIAVHKGRVLKRWMPRAFGRATPKFKKYSHIEIVVAEEE.

This sequence belongs to the universal ribosomal protein uL22 family. In terms of assembly, part of the 50S ribosomal subunit.

In terms of biological role, this protein binds specifically to 23S rRNA. It makes multiple contacts with different domains of the 23S rRNA in the assembled 50S subunit and ribosome. Functionally, the globular domain of the protein is located near the polypeptide exit tunnel on the outside of the subunit, while an extended beta-hairpin is found that lines the wall of the exit tunnel in the center of the 70S ribosome. The polypeptide is Large ribosomal subunit protein uL22 (Hyperthermus butylicus (strain DSM 5456 / JCM 9403 / PLM1-5)).